The following is a 184-amino-acid chain: MMSQPPKVLLLYAHPESQDSIANRVLLQPARHAQHVTVHDLYAHYPDFFIDIHHEQQLLREHQIIVFQHPLYTYSCPALLKEWLDRVLSRGFASGPGGNELEGKYWRSVITTGEPEAAYHQQGLNRYPMSDIMRPFELTAQMCRMHWMTPMIIYWARRQSAETMKHYARAYGDWLENPLPHGGV.

This sequence belongs to the NAD(P)H dehydrogenase (quinone) family. KefG subfamily. Interacts with KefB.

Its subcellular location is the cell inner membrane. The catalysed reaction is a quinone + NADH + H(+) = a quinol + NAD(+). It carries out the reaction a quinone + NADPH + H(+) = a quinol + NADP(+). Its function is as follows. Regulatory subunit of a potassium efflux system that confers protection against electrophiles. Required for full activity of KefB. This chain is Glutathione-regulated potassium-efflux system ancillary protein KefG, found in Erwinia tasmaniensis (strain DSM 17950 / CFBP 7177 / CIP 109463 / NCPPB 4357 / Et1/99).